The chain runs to 132 residues: MKGIRSNIPRALNAGAKVPCVDNTGAKVVEIISVKKYRGVKNRMPCAGIGDMCVVSVKKGTPEMRKQVLLAVVVRQKQEFRRPDGLRVSFEDNAMVITDEEGIPKGTDIKGPIAREVAERYPKIGTTASIIV.

It belongs to the universal ribosomal protein uL14 family. As to quaternary structure, part of the 50S ribosomal subunit. Forms a cluster with proteins L3 and L24e, part of which may contact the 16S rRNA in 2 intersubunit bridges.

In terms of biological role, binds to 23S rRNA. Forms part of two intersubunit bridges in the 70S ribosome. This is Large ribosomal subunit protein uL14 from Methanosarcina barkeri (strain Fusaro / DSM 804).